A 304-amino-acid chain; its full sequence is Peptidyl-prolyl cis-trans isomerase FKBP35 (304 aa).

The PPIase FKBP-type domain occupies 37 to 126 (GNEVTVHYVG…LFEIELLSFR (90 aa)). TPR repeat units follow at residues 144–177 (AFDI…FIHT), 194–227 (ISCN…DKNN), and 228–261 (VKAL…NPNN).

Belongs to the FKBP-type PPIase family. Homodimer. Interacts (via TPR repeats) with HSP90 (probably via MEEVD motif).

Its subcellular location is the cytoplasm. It is found in the nucleus. It carries out the reaction [protein]-peptidylproline (omega=180) = [protein]-peptidylproline (omega=0). Its activity is regulated as follows. Inhibited by FK506 and its derivates, such as ascomycin, and rapamycin. FK506 and rapamycin inhibit peptidylprolyl isomerase activity but not chaperone activity. Inhibited by N-(2-ethyl-phenyl)-2-(3H-imidazao [4, 5-b] pyridin-2-yl-sulfanyl)-acetamide (D44). Not inhibited by cyclosporin A. Inhibition of calcineurin phosphatase activity is enhanced by FK506. Its function is as follows. Has peptidylprolyl isomerase (PPIase) and co-chaperone activities. Assists protein folding by catalyzing the peptidyl conversion of cis and trans rotamers of the prolyl amide bond of protein substrates. Inhibits calcineurin phosphatase activity in vitro. Plays an essential role in merozoite egress from host erythrocytes. In Plasmodium falciparum (isolate 3D7), this protein is Peptidyl-prolyl cis-trans isomerase FKBP35.